The chain runs to 552 residues: Arginine--tRNA ligase (552 aa).

A 'HIGH' region motif is present at residues 123 to 133 (ANPTGPLTIGR).

The protein belongs to the class-I aminoacyl-tRNA synthetase family. In terms of assembly, monomer.

It localises to the cytoplasm. It catalyses the reaction tRNA(Arg) + L-arginine + ATP = L-arginyl-tRNA(Arg) + AMP + diphosphate. The polypeptide is Arginine--tRNA ligase (Chlorobium phaeovibrioides (strain DSM 265 / 1930) (Prosthecochloris vibrioformis (strain DSM 265))).